Here is a 145-residue protein sequence, read N- to C-terminus: Cell division protein SepF (145 aa).

Basic and acidic residues predominate over residues 23-41; it reads PQEVSKTKDENAKPKHETP. Residues 23–42 form a disordered region; sequence PQEVSKTKDENAKPKHETPK.

This sequence belongs to the SepF family. As to quaternary structure, homodimer. Interacts with FtsZ.

The protein resides in the cytoplasm. In terms of biological role, cell division protein that is part of the divisome complex and is recruited early to the Z-ring. Probably stimulates Z-ring formation, perhaps through the cross-linking of FtsZ protofilaments. Its function overlaps with FtsA. This Caldicellulosiruptor bescii (strain ATCC BAA-1888 / DSM 6725 / KCTC 15123 / Z-1320) (Anaerocellum thermophilum) protein is Cell division protein SepF.